Reading from the N-terminus, the 426-residue chain is Serine--tRNA ligase (426 aa).

Position 232 to 234 (232 to 234 (TAE)) interacts with L-serine. ATP is bound at residue 263–265 (RRE). Glu-286 serves as a coordination point for L-serine. 350–353 (EISS) lines the ATP pocket. Ser-385 contributes to the L-serine binding site.

Belongs to the class-II aminoacyl-tRNA synthetase family. Type-1 seryl-tRNA synthetase subfamily. Homodimer. The tRNA molecule binds across the dimer.

The protein resides in the cytoplasm. It catalyses the reaction tRNA(Ser) + L-serine + ATP = L-seryl-tRNA(Ser) + AMP + diphosphate + H(+). The catalysed reaction is tRNA(Sec) + L-serine + ATP = L-seryl-tRNA(Sec) + AMP + diphosphate + H(+). It functions in the pathway aminoacyl-tRNA biosynthesis; selenocysteinyl-tRNA(Sec) biosynthesis; L-seryl-tRNA(Sec) from L-serine and tRNA(Sec): step 1/1. In terms of biological role, catalyzes the attachment of serine to tRNA(Ser). Is also able to aminoacylate tRNA(Sec) with serine, to form the misacylated tRNA L-seryl-tRNA(Sec), which will be further converted into selenocysteinyl-tRNA(Sec). The sequence is that of Serine--tRNA ligase from Fervidobacterium nodosum (strain ATCC 35602 / DSM 5306 / Rt17-B1).